Here is a 682-residue protein sequence, read N- to C-terminus: MSRKQLALLEPTLVRQALLDAVKKLSPMVQWRNPVMFIVWVGSLLTTLLAIAMAGGALTGSATFTAAVSIWLWFTVLFANFAEAMAEGRSKAQANSLKGVKKTAFARKLRAPQHDATVDHVPAEDLRKGDVVLVEAGDIIPCDGEVIEGGASVDESAITGESAPVIRESGGDFASVTGGTRILSDWLVIRCSVNPGETFLDRMIAMVEGAQRRKTPNEIALTILLIALTLVFLLATATIWPFSAWSGNAVSVTVLVALLVCLIPTTIGGLLSAIGVAGMSRMLGANVIATSGRAVEAAGDVDVLLLDKTGTITLGNRQASAFLPARGVEERTLADAAQLSSLADETPEGRSIVVLAKQRFNLRERDLQSLHATFVPFTAQTRMSGINIDQRMIRKGSVDAIRRHVEANGGHFPADVDKQVEEVARQGATPLVVAEGEKVLGIISLKDIVKGGIKERFAQLRKMGIKTVMITGDNRLTAAAIAAEAGVDDFLAEATPEAKLALIRQYQSEGRLVAMTGDGTNDAPALAQADVAVAMNSGTQAAKEAGNMVDLDSNPTKLIEVVHIGKQMLMTRGSLTTFSIANDVAKYFAIIPAAFAAVYPQLAMLNVMGLHSPSSAILSAVIFNALIIVFLIPLALKGVSYRPLSASAMLRRNLWIYGLGGLLVPFIGIKAIDLLLTLSGLV.

The next 4 helical transmembrane spans lie at 35–55, 62–82, 219–239, and 254–274; these read VMFI…AMAG, ATFT…ANFA, IALT…TATI, and VLVA…LSAI. Catalysis depends on aspartate 307, which acts as the 4-aspartylphosphate intermediate. Residues aspartate 344, glutamate 348, 377–384, and lysine 395 contribute to the ATP site; that span reads FTAQTRMS. Aspartate 518 and aspartate 522 together coordinate Mg(2+). A run of 3 helical transmembrane segments spans residues 588 to 608, 616 to 636, and 656 to 676; these read FAII…LNVM, AILS…PLAL, and IYGL…DLLL.

The protein belongs to the cation transport ATPase (P-type) (TC 3.A.3) family. Type IA subfamily. The system is composed of three essential subunits: KdpA, KdpB and KdpC.

It localises to the cell inner membrane. The enzyme catalyses K(+)(out) + ATP + H2O = K(+)(in) + ADP + phosphate + H(+). Its function is as follows. Part of the high-affinity ATP-driven potassium transport (or Kdp) system, which catalyzes the hydrolysis of ATP coupled with the electrogenic transport of potassium into the cytoplasm. This subunit is responsible for energy coupling to the transport system and for the release of the potassium ions to the cytoplasm. This Klebsiella pneumoniae (strain 342) protein is Potassium-transporting ATPase ATP-binding subunit.